The primary structure comprises 285 residues: ATP phosphoribosyltransferase (285 aa).

This sequence belongs to the ATP phosphoribosyltransferase family. Long subfamily. Mg(2+) serves as cofactor.

It is found in the cytoplasm. The enzyme catalyses 1-(5-phospho-beta-D-ribosyl)-ATP + diphosphate = 5-phospho-alpha-D-ribose 1-diphosphate + ATP. Its pathway is amino-acid biosynthesis; L-histidine biosynthesis; L-histidine from 5-phospho-alpha-D-ribose 1-diphosphate: step 1/9. With respect to regulation, feedback inhibited by histidine. Catalyzes the condensation of ATP and 5-phosphoribose 1-diphosphate to form N'-(5'-phosphoribosyl)-ATP (PR-ATP). Has a crucial role in the pathway because the rate of histidine biosynthesis seems to be controlled primarily by regulation of HisG enzymatic activity. The sequence is that of ATP phosphoribosyltransferase from Streptomyces coelicolor (strain ATCC BAA-471 / A3(2) / M145).